The following is a 121-amino-acid chain: Putative ferredoxin (121 aa).

It to E.coli YkgJ.

The polypeptide is Putative ferredoxin (Acinetobacter calcoaceticus).